The following is a 156-amino-acid chain: Snaclec A5 (156 aa).

An N-terminal signal peptide occupies residues methionine 1 to alanine 23. 3 disulfide bridges follow: cysteine 27–cysteine 38, cysteine 55–cysteine 154, and cysteine 129–cysteine 146. A C-type lectin domain is found at histidine 34–glutamate 155.

This sequence belongs to the snaclec family. Heterodimer; disulfide-linked. In terms of tissue distribution, expressed by the venom gland.

Its subcellular location is the secreted. Interferes with one step of hemostasis (modulation of platelet aggregation, or coagulation cascade, for example). This chain is Snaclec A5, found in Macrovipera lebetinus (Levantine viper).